Consider the following 424-residue polypeptide: Serine incorporator 5 (424 aa).

Topologically, residues 1–6 (MYALYF) are extracellular. A helical transmembrane segment spans residues 7-23 (ILVVVLCCIMMSTTVAH). Residues 24–52 (KMKEHIPFFEDMCKGIKAGDTCEKLVGYS) are Cytoplasmic-facing. The chain crosses the membrane as a helical span at residues 53–73 (AVYRVCFGMACFFFIFCLLTL). Topologically, residues 74–87 (KINNSKSCRAHIHN) are extracellular. A glycan (N-linked (GlcNAc...) asparagine) is linked at Asn-76. The chain crosses the membrane as a helical span at residues 88–108 (GFWFFKLLLLGAMCSGAFFIP). Topologically, residues 109 to 119 (DQDTFLNAWRY) are cytoplasmic. Residues 120–140 (VGAVGGFLFIGIQLLLLVEFA) form a helical membrane-spanning segment. The Extracellular portion of the chain corresponds to 141 to 161 (HKWNKNWTAGTASNKLWYASL). Asn-146 carries an N-linked (GlcNAc...) asparagine glycan. Residues 162–182 (ALVTLIMYSIATGGLVLMAVF) form a helical membrane-spanning segment. Over 183-193 (YTQKDGCMENK) the chain is Cytoplasmic. The chain crosses the membrane as a helical span at residues 194–214 (ILLGVNGGLCVLISLVAISPC). Topologically, residues 215 to 221 (VQNRQPH) are extracellular. A helical transmembrane segment spans residues 222 to 242 (SGLLQSGVISCYVTYLTFSAL). Residues 243–274 (SSKPAEVVLDEHGKNVTICVPDFGQDLYRDEN) are Cytoplasmic-facing. Residues 275 to 295 (LVTILGTSLLIGCILYSCLTS) form a helical membrane-spanning segment. Topologically, residues 296–348 (TTRSSSDALQGRYAAPELEIARCCFCFSPGGEDTEEQQQGKEGPRVIYDEKKG) are extracellular. Residues 349–369 (TVYIYSYFHFVFFLASLYVMM) traverse the membrane as a helical segment. Topologically, residues 370-391 (TVTNWFNYESANIESFFSGSWS) are cytoplasmic. Residues 392–412 (IFWVKMASCWICVLLYLCTLV) traverse the membrane as a helical segment. Residues 413 to 424 (APLCCPTREFSV) lie on the Extracellular side of the membrane.

The protein belongs to the TDE1 family.

It is found in the cell membrane. It catalyses the reaction a 1,2-diacyl-sn-glycero-3-phospho-L-serine(in) = a 1,2-diacyl-sn-glycero-3-phospho-L-serine(out). It carries out the reaction a 1,2-diacyl-sn-glycero-3-phosphocholine(in) = a 1,2-diacyl-sn-glycero-3-phosphocholine(out). The enzyme catalyses a 1,2-diacyl-sn-glycero-3-phosphoethanolamine(in) = a 1,2-diacyl-sn-glycero-3-phosphoethanolamine(out). In terms of biological role, restriction factor required to restrict infectivity of gammaretroviruses: acts by inhibiting an early step of viral infection. Impairs the penetration of the viral particle into the cytoplasm. Non-ATP-dependent, non-specific lipid transporter for phosphatidylserine, phosphatidylcholine, and phosphatidylethanolamine. Functions as a scramblase that flips lipids in both directions across the membrane. Phospholipid scrambling results in gammaretroviral surface exposure of phosphatidylserine and loss of membrane asymmetry, which leads to loss of infectivity. Enhances the incorporation of serine into phosphatidylserine and sphingolipids. May play a role in providing serine molecules for the formation of myelin glycosphingolipids in oligodendrocytes. The sequence is that of Serine incorporator 5 (SERINC5) from Macaca fascicularis (Crab-eating macaque).